The chain runs to 562 residues: Putative transport protein YE1478 (562 aa).

6 consecutive transmembrane segments (helical) span residues 8-28 (LLNG…LCLG), 32-52 (LGPI…LLGQ), 66-86 (FMLF…SIFF), 94-114 (MLAL…GKLF), 118-138 (IGLT…LVGA), and 158-178 (NLSL…ILGA). 2 RCK C-terminal domains span residues 202–288 (LDTD…SFRN) and 290–373 (KEVF…KIGF). The next 5 helical transmembrane spans lie at 383–403 (LLAF…TFQF), 406–426 (FSFG…LGFL), 447–467 (FGLM…INSS), 475–495 (MLIS…IFGA), and 541–561 (IANV…PGIL).

It belongs to the AAE transporter (TC 2.A.81) family. YbjL subfamily.

It is found in the cell membrane. This is Putative transport protein YE1478 from Yersinia enterocolitica serotype O:8 / biotype 1B (strain NCTC 13174 / 8081).